Reading from the N-terminus, the 1519-residue chain is Rho guanine nucleotide exchange factor 40 (1519 aa).

2 disordered regions span residues 194 to 237 (VGHQ…PVEG) and 253 to 503 (RGSP…LETV). Residues 200–218 (TLPPELPSGPPGLPSPPLP) are compositionally biased toward pro residues. S262 bears the Phosphoserine mark. The span at 280 to 290 (KGRHRRHRAWM) shows a compositional bias: basic residues. Over residues 314–341 (ASPESPPGAEAVPEAAVLEVSEPPAEAV) the composition is skewed to low complexity. The segment covering 355-367 (LRGGGGGGQGAEG) has biased composition (gly residues). Phosphothreonine is present on T371. Positions 374 to 386 (RTGKGNRRKKRAA) are enriched in basic residues. Position 419 is a phosphoserine (S419). Residues 421–457 (SEHKLPECHLVKEEYEGSGKPESEPKELKTAGEKEPQ) are compositionally biased toward basic and acidic residues. Positions 828–871 (SAEVQERLAQAREALALEENATSQKVLDIFEQRLEQVESGLHRA) form a coiled coil. 2 positions are modified to phosphoserine: S931 and S961. Residues 934 to 961 (ALREWGRCQARCQELERRIQQHVGEEAS) adopt a coiled-coil conformation. Residues 955 to 1031 (HVGEEASPRG…ELAPEAEGRP (77 aa)) are disordered. Residues 980-996 (WGPRSPSPSLSSLLLPS) show a composition bias toward low complexity. Position 1082 is a phosphoserine (S1082). The DH domain maps to 1085–1253 (AQQRLVSELI…REQEARGRDL (169 aa)). The 108-residue stretch at 1265–1372 (DLKEQGQLLH…WTSSIAQLLW (108 aa)) folds into the PH domain. Residues S1433, S1438, and S1474 each carry the phosphoserine modification. The disordered stretch occupies residues 1466–1519 (TLDSSGDVSPGPRNSPSLQPPHPGSSTPTLASRGILGLSRQSHARALSDPTTPL). The segment covering 1467–1482 (LDSSGDVSPGPRNSPS) has biased composition (polar residues). T1492 bears the Phosphothreonine mark.

Expressed at higher level in the central nervous system and skeletal muscle and greater abundance in fetal than adult brain (at protein level).

Its subcellular location is the cytoplasm. Functionally, may act as a guanine nucleotide exchange factor (GEF). This chain is Rho guanine nucleotide exchange factor 40 (ARHGEF40), found in Homo sapiens (Human).